Here is a 356-residue protein sequence, read N- to C-terminus: Heat-inducible transcription repressor HrcA (356 aa).

This sequence belongs to the HrcA family.

Negative regulator of class I heat shock genes (grpE-dnaK-dnaJ and groELS operons). Prevents heat-shock induction of these operons. This Gluconobacter oxydans (strain 621H) (Gluconobacter suboxydans) protein is Heat-inducible transcription repressor HrcA.